The following is a 269-amino-acid chain: Tungstate-binding protein TupA (269 aa).

A signal peptide spans 1 to 17 (MKKIISLALALALSASA).

In terms of assembly, the complex is composed of two ATP-binding proteins (TupC), two transmembrane proteins (TupB) and a solute-binding protein (TupA).

The protein resides in the periplasm. Functionally, part of an ABC transporter complex involved in ultra-high affinity tungstate uptake. Specifically binds tungstate. The sequence is that of Tungstate-binding protein TupA from Campylobacter jejuni subsp. jejuni serotype O:2 (strain ATCC 700819 / NCTC 11168).